A 180-amino-acid chain; its full sequence is Putative 5'(3')-deoxyribonucleotidase (180 aa).

Aspartate 9 acts as the Nucleophile in catalysis. 3 residues coordinate Mg(2+): aspartate 9, aspartate 11, and aspartate 135. The Proton donor role is filled by aspartate 11.

It belongs to the 5'(3')-deoxyribonucleotidase family. Mg(2+) serves as cofactor.

Its function is as follows. Dephosphorylates the 5' and 2'(3')-phosphates of deoxyribonucleotides. The polypeptide is Putative 5'(3')-deoxyribonucleotidase (Staphylococcus aureus (strain MSSA476)).